A 247-amino-acid polypeptide reads, in one-letter code: Adenosylcobinamide-GDP ribazoletransferase (247 aa).

The next 6 helical transmembrane spans lie at 31 to 51, 55 to 75, 109 to 129, 135 to 155, 183 to 203, and 227 to 247; these read ILFYPLVGLIIGGILFLVTCI, LPALLLAAIVLALWIWLTGGL, IGVLSLVIICLLKFALVYVLI, LFLICIPILGRVVPSILFLTT, VLLLPLYWGWQGLIAIIGFLI, and AIEIGETVLMFTFVVSYFYLV.

This sequence belongs to the CobS family. It depends on Mg(2+) as a cofactor.

It is found in the cell inner membrane. The enzyme catalyses alpha-ribazole + adenosylcob(III)inamide-GDP = adenosylcob(III)alamin + GMP + H(+). It catalyses the reaction alpha-ribazole 5'-phosphate + adenosylcob(III)inamide-GDP = adenosylcob(III)alamin 5'-phosphate + GMP + H(+). It functions in the pathway cofactor biosynthesis; adenosylcobalamin biosynthesis; adenosylcobalamin from cob(II)yrinate a,c-diamide: step 7/7. In terms of biological role, joins adenosylcobinamide-GDP and alpha-ribazole to generate adenosylcobalamin (Ado-cobalamin). Also synthesizes adenosylcobalamin 5'-phosphate from adenosylcobinamide-GDP and alpha-ribazole 5'-phosphate. This Acinetobacter baumannii (strain ATCC 17978 / DSM 105126 / CIP 53.77 / LMG 1025 / NCDC KC755 / 5377) protein is Adenosylcobinamide-GDP ribazoletransferase.